A 647-amino-acid polypeptide reads, in one-letter code: RalBP1-associated Eps domain-containing protein 2 (647 aa).

One can recognise an EH 1 domain in the interval glutamate 21–proline 122. The interval glutamate 156–proline 233 is disordered. Over residues asparagine 158–glutamate 170 the composition is skewed to basic and acidic residues. Over residues proline 221 to glycine 230 the composition is skewed to low complexity. Residue serine 239 is modified to Phosphoserine. In terms of domain architecture, EH 2 spans glutamine 268 to phenylalanine 359. Residues leucine 301–arginine 336 enclose the EF-hand domain. Ca(2+) is bound by residues aspartate 314, aspartate 316, aspartate 318, and glutamate 325. Residues proline 402–alanine 478 are disordered. Phosphothreonine is present on threonine 466. Residue serine 480 is modified to Phosphoserine. Residues proline 492 to glutamate 568 are disordered. Positions leucine 499–cysteine 510 are enriched in pro residues. An interaction with RALBP1 region spans residues proline 501–leucine 647. The span at serine 524–threonine 539 shows a compositional bias: polar residues. The tract at residues proline 548–leucine 647 is interaction with ASAP1. The stretch at isoleucine 599–glutamine 640 forms a coiled coil.

Interacts with EPN1. Interacts with EPS15 AND EPS15L1. Interacts with RALBP1; can form a ternary complex with activated Ral (RALA or RALB). Interacts with ASAP1; the interaction is direct and this complex can bind paxillin. Also forms a ternary complex with RALBP1 and ASAP1. Interacts with GRB2. Post-translationally, tyrosine-phosphorylated upon stimulation of cells with EGF. Phosphorylation on Tyr-residues induces its association with the EGF receptor probably indirectly through an adapter like GRB2.

It is found in the cytoplasm. Involved in ligand-dependent receptor mediated endocytosis of the EGF and insulin receptors as part of the Ral signaling pathway. By controlling growth factor receptors endocytosis may regulate cell survival. Through ASAP1 may regulate cell adhesion and migration. This is RalBP1-associated Eps domain-containing protein 2 (Reps2) from Mus musculus (Mouse).